The sequence spans 417 residues: NADH-quinone oxidoreductase subunit D (417 aa).

It belongs to the complex I 49 kDa subunit family. As to quaternary structure, NDH-1 is composed of 14 different subunits. Subunits NuoB, C, D, E, F, and G constitute the peripheral sector of the complex.

Its subcellular location is the cell inner membrane. It catalyses the reaction a quinone + NADH + 5 H(+)(in) = a quinol + NAD(+) + 4 H(+)(out). Functionally, NDH-1 shuttles electrons from NADH, via FMN and iron-sulfur (Fe-S) centers, to quinones in the respiratory chain. The immediate electron acceptor for the enzyme in this species is believed to be ubiquinone. Couples the redox reaction to proton translocation (for every two electrons transferred, four hydrogen ions are translocated across the cytoplasmic membrane), and thus conserves the redox energy in a proton gradient. The chain is NADH-quinone oxidoreductase subunit D from Francisella tularensis subsp. holarctica (strain FTNF002-00 / FTA).